We begin with the raw amino-acid sequence, 97 residues long: Co-chaperonin GroES (97 aa).

The protein belongs to the GroES chaperonin family. As to quaternary structure, heptamer of 7 subunits arranged in a ring. Interacts with the chaperonin GroEL.

The protein localises to the cytoplasm. In terms of biological role, together with the chaperonin GroEL, plays an essential role in assisting protein folding. The GroEL-GroES system forms a nano-cage that allows encapsulation of the non-native substrate proteins and provides a physical environment optimized to promote and accelerate protein folding. GroES binds to the apical surface of the GroEL ring, thereby capping the opening of the GroEL channel. This chain is Co-chaperonin GroES, found in Symbiobacterium thermophilum (strain DSM 24528 / JCM 14929 / IAM 14863 / T).